The following is a 186-amino-acid chain: Testis-expressed protein 36 (186 aa).

The disordered stretch occupies residues 1 to 52 (MTKGRRFNPPSDKDGRWFPHIGLTQKTPESITSATSKEPQSPHLPRQAEGKL). The span at 24 to 39 (TQKTPESITSATSKEP) shows a compositional bias: polar residues.

In Homo sapiens (Human), this protein is Testis-expressed protein 36 (TEX36).